A 57-amino-acid chain; its full sequence is DNA-directed RNA polymerase subunit Rpo6 (57 aa).

It belongs to the archaeal Rpo6/eukaryotic RPB6 RNA polymerase subunit family. In terms of assembly, part of the RNA polymerase complex.

It is found in the cytoplasm. It carries out the reaction RNA(n) + a ribonucleoside 5'-triphosphate = RNA(n+1) + diphosphate. DNA-dependent RNA polymerase (RNAP) catalyzes the transcription of DNA into RNA using the four ribonucleoside triphosphates as substrates. The chain is DNA-directed RNA polymerase subunit Rpo6 from Pyrococcus abyssi (strain GE5 / Orsay).